We begin with the raw amino-acid sequence, 100 residues long: uncharacterized protein (100 aa).

This is an uncharacterized protein from Acanthamoeba polyphaga mimivirus (APMV).